A 399-amino-acid chain; its full sequence is Enoyl-[acyl-carrier-protein] reductase [NADH] 2 (399 aa).

NAD(+) is bound by residues 48-53 (GASSGF), 75-76 (FE), 112-113 (DA), and 141-142 (LA). A substrate-binding site is contributed by Tyr-227. The active-site Proton donor is Tyr-237. NAD(+)-binding positions include Lys-246 and 275–277 (LVT).

This sequence belongs to the TER reductase family. As to quaternary structure, monomer.

It carries out the reaction a 2,3-saturated acyl-[ACP] + NAD(+) = a (2E)-enoyl-[ACP] + NADH + H(+). The protein operates within lipid metabolism; fatty acid biosynthesis. Functionally, involved in the final reduction of the elongation cycle of fatty acid synthesis (FAS II). Catalyzes the reduction of a carbon-carbon double bond in an enoyl moiety that is covalently linked to an acyl carrier protein (ACP). This chain is Enoyl-[acyl-carrier-protein] reductase [NADH] 2, found in Vibrio parahaemolyticus serotype O3:K6 (strain RIMD 2210633).